Consider the following 728-residue polypeptide: Polyphosphate kinase (728 aa).

Residue Asn-57 participates in ATP binding. 2 residues coordinate Mg(2+): Arg-408 and Arg-438. Residue His-468 is the Phosphohistidine intermediate of the active site. The ATP site is built by Tyr-501, Arg-597, and His-625. Residues 694–728 (VQRRPASPEQSQSSQAIFTAQAIAETTEDPELRSV) form a disordered region. The span at 695-709 (QRRPASPEQSQSSQA) shows a compositional bias: low complexity.

It belongs to the polyphosphate kinase 1 (PPK1) family. Mg(2+) is required as a cofactor. Post-translationally, an intermediate of this reaction is the autophosphorylated ppk in which a phosphate is covalently linked to a histidine residue through a N-P bond.

It catalyses the reaction [phosphate](n) + ATP = [phosphate](n+1) + ADP. Functionally, catalyzes the reversible transfer of the terminal phosphate of ATP to form a long-chain polyphosphate (polyP). The polypeptide is Polyphosphate kinase (Synechocystis sp. (strain ATCC 27184 / PCC 6803 / Kazusa)).